We begin with the raw amino-acid sequence, 416 residues long: Putative UV-damage repair protein UvrX (416 aa).

Residues 12-196 form the UmuC domain; it reads ILCVDMKSFY…RPLSKMWGIG (185 aa). Mg(2+) contacts are provided by Asp16 and Asp115. Glu116 is an active-site residue.

Belongs to the DNA polymerase type-Y family. It depends on Mg(2+) as a cofactor.

The chain is Putative UV-damage repair protein UvrX (uvrX) from Bacillus subtilis (strain 168).